A 316-amino-acid chain; its full sequence is ATP synthase gamma chain (316 aa).

This sequence belongs to the ATPase gamma chain family. As to quaternary structure, F-type ATPases have 2 components, CF(1) - the catalytic core - and CF(0) - the membrane proton channel. CF(1) has five subunits: alpha(3), beta(3), gamma(1), delta(1), epsilon(1). CF(0) has three main subunits: a, b and c.

It is found in the cellular thylakoid membrane. Produces ATP from ADP in the presence of a proton gradient across the membrane. The gamma chain is believed to be important in regulating ATPase activity and the flow of protons through the CF(0) complex. The sequence is that of ATP synthase gamma chain from Prochlorococcus marinus (strain MIT 9303).